A 906-amino-acid chain; its full sequence is Protein translocase subunit SecA (906 aa).

ATP is bound by residues Gln-86, 104–108 (GEGKT), and Asp-511. Composition is skewed to basic and acidic residues over residues 853-865 (HESV…RHDE) and 877-888 (VRREGPKVKRND). The disordered stretch occupies residues 853 to 906 (HESVIDNNQRHDEDEQEEAPKVQQVRREGPKVKRNDPCPCGSGKKYKQCHGKVE). 4 residues coordinate Zn(2+): Cys-890, Cys-892, Cys-901, and His-902. Over residues 896-906 (KKYKQCHGKVE) the composition is skewed to basic residues.

This sequence belongs to the SecA family. Monomer and homodimer. Part of the essential Sec protein translocation apparatus which comprises SecA, SecYEG and auxiliary proteins SecDF-YajC and YidC. Zn(2+) serves as cofactor.

The protein resides in the cell inner membrane. The protein localises to the cytoplasm. The catalysed reaction is ATP + H2O + cellular proteinSide 1 = ADP + phosphate + cellular proteinSide 2.. In terms of biological role, part of the Sec protein translocase complex. Interacts with the SecYEG preprotein conducting channel. Has a central role in coupling the hydrolysis of ATP to the transfer of proteins into and across the cell membrane, serving both as a receptor for the preprotein-SecB complex and as an ATP-driven molecular motor driving the stepwise translocation of polypeptide chains across the membrane. The polypeptide is Protein translocase subunit SecA (Francisella tularensis subsp. holarctica (strain FTNF002-00 / FTA)).